Consider the following 690-residue polypeptide: Exonuclease GOR (690 aa).

Disordered regions lie at residues 136 to 162 (TRVA…NRSG) and 567 to 690 (QPRH…SLHH). Polar residues predominate over residues 585-595 (APSTTAISPES). Residues 605-614 (KETGAVDGRR) are compositionally biased toward basic and acidic residues. A GOR14-1 epitope region spans residues 612-626 (GRRGQKAKSNPNRPL). The span at 631–646 (NPCRGPSGLSPSLCPS) shows a compositional bias: low complexity. Pro residues predominate over residues 661-682 (PPLPVPRVPAAPPRACPHPSAH).

This sequence belongs to the REXO1/REXO3 family.

Its subcellular location is the cytoplasm. The protein resides in the nucleus. This chain is Exonuclease GOR (REXO1L1), found in Pan troglodytes (Chimpanzee).